The following is an 82-amino-acid chain: MSDTIRTLQGRVLSNKMDKSITVAIERKVKHPLYGKFLKRTTKIHAHDEQNQCNAGDVVTIRECRPLSKTKSWTLVEVVTKA.

Belongs to the universal ribosomal protein uS17 family. In terms of assembly, part of the 30S ribosomal subunit.

One of the primary rRNA binding proteins, it binds specifically to the 5'-end of 16S ribosomal RNA. The protein is Small ribosomal subunit protein uS17 of Shewanella woodyi (strain ATCC 51908 / MS32).